The chain runs to 470 residues: Cupincin (470 aa).

An N-terminal signal peptide occupies residues 1 to 34; sequence MAKKKTSSSMARSQLAALLISLCFLSLASNAVGW. Residues 36–52 are compositionally biased toward basic and acidic residues; it reads RRGEREEEDERRRHGGE. Disordered stretches follow at residues 36-59 and 240-261; these read RRGE…PYHL and KSCS…PSSL. Cupin type-1 domains are found at residues 57-215 and 259-445; these read YHLG…EELE and SSLT…AREA. Asn-297 is a glycosylation site (N-linked (GlcNAc...) asparagine). The disordered stretch occupies residues 330–368; sequence PHVSGGGSSERREREREHGRRREEEQGEEEHGERGEKAR. A compositionally biased stretch (basic and acidic residues) spans 338-367; that stretch reads SERREREREHGRRREEEQGEEEHGERGEKA. Zn(2+) is bound by residues His-347, Glu-352, and His-360.

It belongs to the 7S seed storage protein family. Homotrimer. The cofactor is Zn(2+).

The protein localises to the secreted. In terms of biological role, seed storage protein. Globulin-like protein that acts as a zinc metalloprotease. Cleaves specifically between Leu-15 and Tyr-16 of insulin B chain, and Gln-1 and Leu-2 of neurotensin (NT) peptide in vitro. May play a role as an initiating endopeptidase in germinating seeds. This Oryza sativa subsp. japonica (Rice) protein is Cupincin.